Consider the following 2625-residue polypeptide: Highly reducing polyketide synthase frbB (2625 aa).

Basic and acidic residues predominate over residues 1-10 (MRNIDEHMSE). The interval 1–25 (MRNIDEHMSERATLQSSGGYGERDS) is disordered. Residues 27–449 (VEPIAIIGMS…GTNAHVILDR (423 aa)) enclose the Ketosynthase family 3 (KS3) domain. Catalysis depends on for beta-ketoacyl synthase activity residues cysteine 200, histidine 334, and histidine 375. The tract at residues 563–883 (YVFSGQGAQY…DAASTLLTTI (321 aa)) is malonyl-CoA:ACP transacylase (MAT) domain. The interval 942-1080 (HELLGNMSTD…GRIRAVLDDS (139 aa)) is N-terminal hotdog fold. The dehydratase (DH) domain stretch occupies residues 942–1252 (HELLGNMSTD…GMILAKLPGG (311 aa)). The 314-residue stretch at 942–1255 (HELLGNMSTD…LAKLPGGTSR (314 aa)) folds into the PKS/mFAS DH domain. Histidine 974 (proton acceptor; for dehydratase activity) is an active-site residue. The tract at residues 1102–1255 (VRFVSPSAFY…LAKLPGGTSR (154 aa)) is C-terminal hotdog fold. The Proton donor; for dehydratase activity role is filled by aspartate 1167. The segment at 1490-1673 (YHQIKAYIAE…GFVDTEPVFR (184 aa)) is methyltransferase (CMet) domain. An enoyl reductase (ER) domain region spans residues 1907–2220 (GLLETFHWKP…SGKHIGKVIL (314 aa)). The segment at 2261–2439 (AVYIVVGGLG…GYSINIGPVS (179 aa)) is ketoreductase (KR) domain. One can recognise a Carrier domain in the interval 2542-2619 (GAEAAVLTAI…HLARLAAEES (78 aa)). Position 2579 is an O-(pantetheine 4'-phosphoryl)serine (serine 2579).

Its pathway is antifungal biosynthesis. Its function is as follows. Highly reducing polyketide synthase; part of the gene cluster that mediates the biosynthesis of the antifungal antibiotic FR901469, an inhibitor of beta-1,3-glucansynthase, exerting antifungal activity against the pathogenes Candida albicans and Aspergillus fumigatus. FR901469 is a cyclic depsipeptide containing 12 amino acid residues and a fatty acid chain. The NRPS frbI contains 12 modules responsible for the formation of the depsipeptide backbone which is denoted as Acyl-Thr-Ala-Tyr-Val-4OHPro-Thr-Thr-3OHPro-threo3OHGln-Gly-Thr-Orn-OH (C71H116N14O23). The PKS frbB is probably involved in the production of the hydrocarbon chain, and the acyl-CoA ligase frbC might be involved in the transport of the chain to the peptide ptoduct of frbI. Because FR901469 contains 3 hydroxylated amino acid residues, the 3 oxygenases frbA, frbH, and frbJ might be participating in amino acid hydroxylation. As no thioesterase domains were detected in frbI or frbB, the thioesterases frbD and frbE may instead release and cyclize the products of the NRPS and PKS, respectively. This Dothideomycetidae sp. (strain 11243) (Fungal sp. (strain No.11243)) protein is Highly reducing polyketide synthase frbB.